The following is a 299-amino-acid chain: Coenzyme PQQ synthesis protein B (299 aa).

The protein belongs to the PqqB family.

Its pathway is cofactor biosynthesis; pyrroloquinoline quinone biosynthesis. Functionally, may be involved in the transport of PQQ or its precursor to the periplasm. This is Coenzyme PQQ synthesis protein B from Methylorubrum extorquens (strain CM4 / NCIMB 13688) (Methylobacterium extorquens).